Consider the following 293-residue polypeptide: Nucleotide-binding protein BA_5384/GBAA_5384/BAS5004 (293 aa).

14–21 (GMSGAGKT) provides a ligand contact to ATP. 65-68 (DLRG) provides a ligand contact to GTP.

It belongs to the RapZ-like family.

Its function is as follows. Displays ATPase and GTPase activities. The sequence is that of Nucleotide-binding protein BA_5384/GBAA_5384/BAS5004 from Bacillus anthracis.